We begin with the raw amino-acid sequence, 184 residues long: MEGGGVADVAVPGTRKRDRPYKGIRMRKWGKWVAEIREPNKRSRLWLGSYSTPEAAARAYDTAVFYLRGPTARLNFPELLPGEKFSDEDMSAATIRKKATEVGAQVDALGTAVQNNRHRVFGQNRDSDVDNKNFHRNYQNGEREEEEEDEDDKRLRSGGRLLDRVDLNKLPDPESSDEEWESKH.

The AP2/ERF DNA-binding region spans 20–77 (PYKGIRMRKWGKWVAEIREPNKRSRLWLGSYSTPEAAARAYDTAVFYLRGPTARLNFP). A disordered region spans residues 123 to 184 (QNRDSDVDNK…SSDEEWESKH (62 aa)). A compositionally biased stretch (basic and acidic residues) spans 161–172 (LLDRVDLNKLPD). A compositionally biased stretch (acidic residues) spans 174–184 (ESSDEEWESKH).

This sequence belongs to the AP2/ERF transcription factor family. ERF subfamily.

It is found in the nucleus. In terms of biological role, probably acts as a transcriptional activator. Binds to the GCC-box pathogenesis-related promoter element. May be involved in the regulation of gene expression by stress factors and by components of stress signal transduction pathways. The polypeptide is Ethylene-responsive transcription factor ERF010 (ERF010) (Arabidopsis thaliana (Mouse-ear cress)).